The following is a 348-amino-acid chain: Kinetochore-associated protein DSN1 homolog (348 aa).

The segment at 1-105 is disordered; it reads MTSVTRSEDQ…RASMKEVNRR (105 aa). Phosphoserine is present on Ser25. Polar residues-rich tracts occupy residues 33–46 and 70–86; these read PQSS…TQGV and GSQL…QSIR. Phosphoserine occurs at positions 75 and 79. Positions 87 to 104 are enriched in basic and acidic residues; that stretch reads PQDRRQSWRRASMKEVNR. Residues Ser107 and Ser123 each carry the phosphoserine modification. Lys253 is covalently cross-linked (Glycyl lysine isopeptide (Lys-Gly) (interchain with G-Cter in SUMO2)). Residues 325-348 are disordered; that stretch reads MDQLDSSPARKLLKLPLQSSPSTQ. At Ser331 the chain carries Phosphoserine. Residues 338–348 show a composition bias toward low complexity; it reads KLPLQSSPSTQ.

Component of the MIS12 complex composed of MIS12, DSN1, NSL1 and PMF1. Also interacts with KNL1, CBX3 and CBX5. Interacts with KNSTRN.

Its subcellular location is the nucleus. The protein localises to the chromosome. It localises to the centromere. It is found in the kinetochore. Functionally, part of the MIS12 complex which is required for normal chromosome alignment and segregation and kinetochore formation during mitosis. The chain is Kinetochore-associated protein DSN1 homolog (Dsn1) from Mus musculus (Mouse).